The primary structure comprises 300 residues: MNKIWKLKNVKVGVAPILWTNDDMPELGGDISFDQAISEMAEAGYQGTEIGNKFPKDEKILLRELKKYNLEIASAWFSGYIISDFEKNFQDFQKHCLFLKALGAKVVVFSEQTYSIQGQNKPLFKDKPYFTNQEFENLAQGLNKFGKWSKQHGIELVYHHHMGTGIQSLKETEKILELTDPEFVSLIFDTGHFAHAGEDIVFCLKRLISRIRHIHLKDIRKEKINELKTKNLSFLEGVKQGIFTVPGDGDIKNYPLFFELLAKNNYQGWLIVEAEQDPRKANPLEYAKKAMDYLRSLISW.

It belongs to the IolE/MocC family. Requires glutathione as cofactor. Co(2+) is required as a cofactor. The cofactor is Mn(2+).

It catalyses the reaction scyllo-inosose = 3D-3,5/4-trihydroxycyclohexane-1,2-dione + H2O. Its function is as follows. Catalyzes the dehydration of inosose (2-keto-myo-inositol, 2KMI or 2,4,6/3,5-pentahydroxycyclohexanone) to 3D-(3,5/4)-trihydroxycyclohexane-1,2-dione (D-2,3-diketo-4-deoxy-epi-inositol). In Mesomycoplasma hyopneumoniae (strain J / ATCC 25934 / NCTC 10110) (Mycoplasma hyopneumoniae), this protein is Inosose dehydratase.